The primary structure comprises 415 residues: Histidine--tRNA ligase (415 aa).

The protein belongs to the class-II aminoacyl-tRNA synthetase family. In terms of assembly, homodimer.

It localises to the cytoplasm. It carries out the reaction tRNA(His) + L-histidine + ATP = L-histidyl-tRNA(His) + AMP + diphosphate + H(+). The protein is Histidine--tRNA ligase of Rickettsia canadensis (strain McKiel).